Consider the following 83-residue polypeptide: Hainantoxin-III 5 (83 aa).

The first 21 residues, 1-21, serve as a signal peptide directing secretion; that stretch reads MKASRFLALAGLVLLFVVGYA. Residues 22–48 constitute a propeptide that is removed on maturation; that stretch reads SESEEKEFPRELLSKIFAVDDFKGEER. Cystine bridges form between cysteine 50–cysteine 65, cysteine 57–cysteine 70, and cysteine 64–cysteine 77. Leucine amide is present on leucine 81.

It belongs to the neurotoxin 10 (Hwtx-1) family. 15 (Hntx-3) subfamily. In terms of assembly, monomer. In terms of tissue distribution, expressed by the venom gland.

Its subcellular location is the secreted. Its function is as follows. Selective antagonist of neuronal tetrodotoxin (TTX)-sensitive voltage-gated sodium channels (IC(50)=1270 nM on Nav1.1/SCN1A, 270 nM on Nav1.2/SCN2A, 491 nM on Nav1.3/SCN3A and 232 nM on Nav1.7/SCN9A). This toxin suppress Nav1.7 current amplitude without significantly altering the activation, inactivation, and repriming kinetics. Short extreme depolarizations partially activate the toxin-bound channel, indicating voltage-dependent inhibition of this toxin. This toxin increases the deactivation of the Nav1.7 current after extreme depolarizations. The toxin-Nav1.7 complex is gradually dissociated upon prolonged strong depolarizations in a voltage-dependent manner, and the unbound toxin rebinds to Nav1.7 after a long repolarization. Moreover, analysis of chimeric channels showed that the DIIS3-S4 linker is critical for toxin binding to Nav1.7. These data are consistent with this toxin interacting with Nav1.7 site 4 and trapping the domain II voltage sensor in the closed state. This chain is Hainantoxin-III 5, found in Cyriopagopus hainanus (Chinese bird spider).